Here is a 177-residue protein sequence, read N- to C-terminus: MLWFVVGALFPALLLAAPPPINKLALFPDKSAWCEAKNITQIVGHSGCESKSIQNRACLGQCFSYSVPNTFPQSTESLVHCDSCMPAQSMWEIVTLDCPGNDEIPRVDKLVEKILHCSCQACGKEPSHEGALFNVYLNAEENMPAEGPGPHHYAHHQQEVEEPPASSHHHHEEEGDE.

The N-terminal stretch at 1 to 16 (MLWFVVGALFPALLLA) is a signal peptide. Cystine bridges form between Cys34/Cys84, Cys48/Cys98, Cys58/Cys117, Cys62/Cys119, and Cys81/Cys122. In terms of domain architecture, CTCK spans 34-123 (CEAKNITQIV…ILHCSCQACG (90 aa)). The disordered stretch occupies residues 143-177 (MPAEGPGPHHYAHHQQEVEEPPASSHHHHEEEGDE).

It belongs to the DAN family.

The protein resides in the secreted. In terms of biological role, may act as a tumor suppressor. The sequence is that of Neuroblastoma suppressor of tumorigenicity 1 (NBL1) from Gallus gallus (Chicken).